The chain runs to 352 residues: S-adenosylmethionine:tRNA ribosyltransferase-isomerase (352 aa).

It belongs to the QueA family. In terms of assembly, monomer.

The protein localises to the cytoplasm. The enzyme catalyses 7-aminomethyl-7-carbaguanosine(34) in tRNA + S-adenosyl-L-methionine = epoxyqueuosine(34) in tRNA + adenine + L-methionine + 2 H(+). Its pathway is tRNA modification; tRNA-queuosine biosynthesis. In terms of biological role, transfers and isomerizes the ribose moiety from AdoMet to the 7-aminomethyl group of 7-deazaguanine (preQ1-tRNA) to give epoxyqueuosine (oQ-tRNA). In Paraburkholderia phytofirmans (strain DSM 17436 / LMG 22146 / PsJN) (Burkholderia phytofirmans), this protein is S-adenosylmethionine:tRNA ribosyltransferase-isomerase.